Here is a 458-residue protein sequence, read N- to C-terminus: Maturase-like protein 1 (458 aa).

It to group II intron maturases.

The protein resides in the plastid. It is found in the chloroplast. Its function is as follows. Could be required for group III intron excision. The protein is Maturase-like protein 1 (mat1) of Euglena gracilis.